Reading from the N-terminus, the 197-residue chain is LexA repressor (197 aa).

Residues 28-47 (VREIARRFRITPRGALLHLI) constitute a DNA-binding region (H-T-H motif). Catalysis depends on for autocatalytic cleavage activity residues Ser119 and Lys156.

It belongs to the peptidase S24 family. As to quaternary structure, homodimer.

The enzyme catalyses Hydrolysis of Ala-|-Gly bond in repressor LexA.. In terms of biological role, represses a number of genes involved in the response to DNA damage (SOS response), including recA and lexA. In the presence of single-stranded DNA, RecA interacts with LexA causing an autocatalytic cleavage which disrupts the DNA-binding part of LexA, leading to derepression of the SOS regulon and eventually DNA repair. This Thermotoga sp. (strain RQ2) protein is LexA repressor.